Reading from the N-terminus, the 369-residue chain is Quinolinate synthase (369 aa).

Residues His47 and Ser64 each coordinate iminosuccinate. Cys111 provides a ligand contact to [4Fe-4S] cluster. Iminosuccinate-binding positions include Tyr142–Asn144 and Ser163. [4Fe-4S] cluster is bound at residue Cys231. Iminosuccinate-binding positions include His257–Glu259 and Thr274. Cys321 is a [4Fe-4S] cluster binding site.

This sequence belongs to the quinolinate synthase family. Type 3 subfamily. The cofactor is [4Fe-4S] cluster.

Its subcellular location is the cytoplasm. The enzyme catalyses iminosuccinate + dihydroxyacetone phosphate = quinolinate + phosphate + 2 H2O + H(+). It functions in the pathway cofactor biosynthesis; NAD(+) biosynthesis; quinolinate from iminoaspartate: step 1/1. Catalyzes the condensation of iminoaspartate with dihydroxyacetone phosphate to form quinolinate. The sequence is that of Quinolinate synthase from Bacillus licheniformis (strain ATCC 14580 / DSM 13 / JCM 2505 / CCUG 7422 / NBRC 12200 / NCIMB 9375 / NCTC 10341 / NRRL NRS-1264 / Gibson 46).